A 196-amino-acid chain; its full sequence is Interleukin-18 (196 aa).

Residues 1–29 (MSCEEIAVCAVRLRENLCLYFEELECDAF) constitute a propeptide that is removed on maturation.

Belongs to the IL-1 family. Forms a ternary complex with ligand-binding receptor subunit IL18R1 and signaling receptor subunit IL18RAP at the plasma membrane. Mature IL18 first binds to IL18R1 forming a low affinity binary complex, which then interacts with IL18RAP to form a high affinity ternary complex that signals inside the cell. Interacts with cargo receptor TMED10; the interaction mediates the translocation from the cytoplasm into the ERGIC (endoplasmic reticulum-Golgi intermediate compartment) and thereby secretion. In terms of processing, the pro-IL-18 precursor is processed by CASP1 or CASP4 to yield the active form.

It localises to the cytoplasm. The protein localises to the secreted. Its function is as follows. Augments natural killer cell activity in spleen cells and stimulates interferon gamma production in T-helper type I cells. Involved in transduction of inflammation downstream of pyroptosis: its mature form is specifically released in the extracellular milieu by passing through the gasdermin-D (GSDMD) pore. The chain is Interleukin-18 (IL18) from Gallus gallus (Chicken).